A 418-amino-acid polypeptide reads, in one-letter code: Equilibrative nucleotide transporter 6 (418 aa).

11 helical membrane-spanning segments follow: residues 19-39 (AMIV…SMLT), 56-76 (VLTL…AYHE), 86-106 (LIGY…DLAT), 112-132 (FGPY…DATV), 142-162 (LMCP…GALT), 186-206 (MFLA…AYVL), 264-284 (HAVN…GFLY), 291-311 (GLGA…DLVG), 326-346 (KLIT…YFTA), 353-373 (WMIM…VCIM), and 392-412 (LVIF…LWLI).

This sequence belongs to the SLC29A/ENT transporter (TC 2.A.57) family. As to expression, expressed in leaves and siliques.

Its subcellular location is the cell membrane. In terms of biological role, nucleoside transporter that can mediate uptake of adenosine, uridine, guanosine or cytidine when expressed in a heterologous system (yeast). In Arabidopsis thaliana (Mouse-ear cress), this protein is Equilibrative nucleotide transporter 6 (ENT6).